A 317-amino-acid polypeptide reads, in one-letter code: MPVQGSLRSLVGAVNSTPTASPHLRPATNQTEPQCLEVSVPVGLFLCLGLVSLVENTLVVAVIAKNRNLHSPMYCFICCLALSDLLVSVSNVLKTAVLLLLEAGALAAQATVVQQLGNVINMLICSSMVSSLCFLGAIAMDRYISIFYALRYHSIVTLARARRAIAAVWVASILSSILFFTYYDRTAALLCLVVFFLAMLVLMAVLYVHMLTQACQHAQGIARLHKRQHPVQQGWGLKGAATLAVLLGVFFLCWGPLFLHLTLIAVCPQHPTCNCIVKNFKLFLALIICNAIVDPLIYAFRSQELRKTLKEVLLFSW.

Residues Met1–Glu37 are Extracellular-facing. The N-linked (GlcNAc...) asparagine glycan is linked to Asn29. Residues Val38–Ile63 traverse the membrane as a helical segment. At Ala64–Pro72 the chain is on the cytoplasmic side. Residues Met73 to Leu93 form a helical membrane-spanning segment. Over Lys94–Asn118 the chain is Extracellular. Residues Val119–Met140 form a helical membrane-spanning segment. Topologically, residues Asp141–Arg163 are cytoplasmic. The helical transmembrane segment at Ala164–Tyr183 threads the bilayer. The Extracellular portion of the chain corresponds to Asp184–Cys191. Residues Leu192 to Leu211 traverse the membrane as a helical segment. The Cytoplasmic portion of the chain corresponds to Thr212 to Ala240. Residues Ala241–Val266 traverse the membrane as a helical segment. Residues Cys267–Asn279 are Extracellular-facing. A helical membrane pass occupies residues Phe280–Phe300. Over Arg301–Trp317 the chain is Cytoplasmic.

This sequence belongs to the G-protein coupled receptor 1 family. In terms of assembly, interacts with MGRN1, but does not undergo MGRN1-mediated ubiquitination; this interaction competes with GNAS-binding and thus inhibits agonist-induced cAMP production. Interacts with OPN3; the interaction results in a decrease in MC1R-mediated cAMP signaling and ultimately a decrease in melanin production in melanocytes.

Its subcellular location is the cell membrane. Its function is as follows. Receptor for MSH (alpha, beta and gamma) and ACTH. The activity of this receptor is mediated by G proteins which activate adenylate cyclase. Mediates melanogenesis, the production of eumelanin (black/brown) and phaeomelanin (red/yellow), via regulation of cAMP signaling in melanocytes. This is Melanocyte-stimulating hormone receptor (MC1R) from Varecia rubra (Red ruffed lemur).